A 794-amino-acid chain; its full sequence is Lon protease (794 aa).

One can recognise a Lon N-terminal domain in the interval 29–222 (VPLLPLRGVL…TLISIIQDEQ (194 aa)). 374-381 (GPPGVGKT) provides a ligand contact to ATP. The Lon proteolytic domain maps to 610 to 791 (TDQVGMATGL…DEVLEHALVG (182 aa)). Residues S697 and K740 contribute to the active site.

Belongs to the peptidase S16 family. As to quaternary structure, homohexamer. Organized in a ring with a central cavity.

The protein localises to the cytoplasm. The catalysed reaction is Hydrolysis of proteins in presence of ATP.. Functionally, ATP-dependent serine protease that mediates the selective degradation of mutant and abnormal proteins as well as certain short-lived regulatory proteins. Required for cellular homeostasis and for survival from DNA damage and developmental changes induced by stress. Degrades polypeptides processively to yield small peptide fragments that are 5 to 10 amino acids long. Binds to DNA in a double-stranded, site-specific manner. The polypeptide is Lon protease (Bacillus thuringiensis (strain Al Hakam)).